The chain runs to 53 residues: uncharacterized protein (53 aa).

Residues 1–19 (MKLLTILILFYSFFMNLQA) form the signal peptide.

This is an uncharacterized protein from Autographa californica nuclear polyhedrosis virus (AcMNPV).